Consider the following 416-residue polypeptide: Histidinol dehydrogenase (416 aa).

3 residues coordinate NAD(+): Tyr117, Gln178, and Asn201. Substrate is bound by residues Thr224, Gln246, and His249. Zn(2+) is bound by residues Gln246 and His249. Active-site proton acceptor residues include Glu314 and His315. 4 residues coordinate substrate: His315, Asp348, Glu402, and His407. Asp348 lines the Zn(2+) pocket. His407 serves as a coordination point for Zn(2+).

The protein belongs to the histidinol dehydrogenase family. Requires Zn(2+) as cofactor.

The enzyme catalyses L-histidinol + 2 NAD(+) + H2O = L-histidine + 2 NADH + 3 H(+). Its pathway is amino-acid biosynthesis; L-histidine biosynthesis; L-histidine from 5-phospho-alpha-D-ribose 1-diphosphate: step 9/9. Its function is as follows. Catalyzes the sequential NAD-dependent oxidations of L-histidinol to L-histidinaldehyde and then to L-histidine. The chain is Histidinol dehydrogenase from Staphylococcus aureus (strain bovine RF122 / ET3-1).